A 448-amino-acid chain; its full sequence is Glutamate--tRNA ligase 2 (448 aa).

The 'HIGH' region signature appears at 9–19 (PSPTGKLHIGN). Residues 240-244 (KISKR) carry the 'KMSKS' region motif. Position 243 (Lys-243) interacts with ATP.

It belongs to the class-I aminoacyl-tRNA synthetase family. Glutamate--tRNA ligase type 1 subfamily. In terms of assembly, monomer.

It is found in the cytoplasm. The enzyme catalyses tRNA(Glu) + L-glutamate + ATP = L-glutamyl-tRNA(Glu) + AMP + diphosphate. Functionally, catalyzes the attachment of glutamate to tRNA(Glu) in a two-step reaction: glutamate is first activated by ATP to form Glu-AMP and then transferred to the acceptor end of tRNA(Glu). The polypeptide is Glutamate--tRNA ligase 2 (Orientia tsutsugamushi (strain Boryong) (Rickettsia tsutsugamushi)).